The following is a 217-amino-acid chain: Oxygen-evolving enhancer protein 3-1, chloroplastic (217 aa).

A chloroplast-targeting transit peptide spans 1–68; it reads MAQAMASMTG…GGALSQAARA (68 aa).

The protein belongs to the PsbQ family.

Its subcellular location is the plastid. The protein localises to the chloroplast thylakoid membrane. The protein is Oxygen-evolving enhancer protein 3-1, chloroplastic (PSBQ1) of Zea mays (Maize).